We begin with the raw amino-acid sequence, 124 residues long: Superoxide reductase (124 aa).

Fe cation is bound by residues glutamate 14, histidine 16, histidine 41, histidine 47, cysteine 111, and histidine 114.

The protein belongs to the desulfoferrodoxin family. As to quaternary structure, homotetramer. Fe cation serves as cofactor.

The catalysed reaction is reduced [rubredoxin] + superoxide + 2 H(+) = oxidized [rubredoxin] + H2O2. Uses electrons from reduced NADP, by way of rubredoxin and an oxidoreductase, to catalyze the reduction of superoxide to hydrogen peroxide. The sequence is that of Superoxide reductase (sorA) from Pyrococcus furiosus (strain ATCC 43587 / DSM 3638 / JCM 8422 / Vc1).